The chain runs to 377 residues: Glutamate 5-kinase (377 aa).

Residue lysine 17 coordinates ATP. Substrate contacts are provided by serine 56, aspartate 143, and asparagine 155. 217 to 223 lines the ATP pocket; sequence SGGMFSK. The PUA domain maps to 282–360; that stretch reads AGDLVIDDGA…CEIESILGKC (79 aa).

This sequence belongs to the glutamate 5-kinase family.

It is found in the cytoplasm. The catalysed reaction is L-glutamate + ATP = L-glutamyl 5-phosphate + ADP. The protein operates within amino-acid biosynthesis; L-proline biosynthesis; L-glutamate 5-semialdehyde from L-glutamate: step 1/2. In terms of biological role, catalyzes the transfer of a phosphate group to glutamate to form L-glutamate 5-phosphate. The chain is Glutamate 5-kinase from Maridesulfovibrio salexigens (strain ATCC 14822 / DSM 2638 / NCIMB 8403 / VKM B-1763) (Desulfovibrio salexigens).